Here is a 246-residue protein sequence, read N- to C-terminus: MNNVKDKVVVITGASSGIGEETVNLLSENGAKLVLGARRLDRLEKIQQKVGHDSVSIKKTDVTKPDEVNALIETAYNDFGRIDVLINNAGLMPQSFLEKNKQDEWNQMIDVNIKGVLYGIGAVLPYMRKQKSGHIINLASVAGHVVFPGSAVYCGTKYAVRAITEGLRQEEAIVGSNIRTTILSPGAVSTELTDHISDKDMKQDIDELYKNAIKPDAIARAINYAINEPEESSVNEFIIRPSSQSL.

10–34 is an NADP(+) binding site; that stretch reads VITGASSGIGEETVNLLSENGAKLV. Substrate is bound at residue Ser140. Catalysis depends on Tyr153, which acts as the Proton acceptor.

It belongs to the short-chain dehydrogenases/reductases (SDR) family.

This is an uncharacterized protein from Staphylococcus saprophyticus subsp. saprophyticus (strain ATCC 15305 / DSM 20229 / NCIMB 8711 / NCTC 7292 / S-41).